The sequence spans 274 residues: Thiamine kinase (274 aa).

This sequence belongs to the thiamine kinase family.

The catalysed reaction is thiamine + ATP = thiamine phosphate + ADP + H(+). It participates in cofactor biosynthesis; thiamine diphosphate biosynthesis; thiamine phosphate from thiamine: step 1/1. In terms of biological role, catalyzes the ATP-dependent phosphorylation of thiamine to thiamine phosphate. Is involved in thiamine salvage. This is Thiamine kinase from Salmonella gallinarum (strain 287/91 / NCTC 13346).